The primary structure comprises 368 residues: MRPVWAEVNLENIRHNFREVKRLARQAEAMPVIKANAYGHGAVEVAKALIAEGAKRFAVAILDEGIKLREAGIDAPVLILGYTPPEEVEKLLFYNLTPTLHHRELALAYQERLERLKKTLFYHLKIDTGMGRIGFWYEELEKIEEVLKLKNLEAEGVYTHFARADEQDLSFSKLQIERFNIVLKHLKAKGIEVKYRHAANSAAIMRLPEAHYDLVRPGIMLYGEYPSRDVPRELAHLKPALTLKARVSQVKKVPAGFTVSYGSTYVTSKATLIVSLPLGYADGYFRRLSNRGVVLINGKRWSIAGRVCMDQLMVAVDETERVNPGDEAVLLGKQGEETITAMEMADLVGTINYEILTNISYRVPRIYV.

Catalysis depends on Lys-34, which acts as the Proton acceptor; specific for D-alanine. Position 34 is an N6-(pyridoxal phosphate)lysine (Lys-34). Residue Arg-132 participates in substrate binding. Tyr-261 (proton acceptor; specific for L-alanine) is an active-site residue. Met-309 serves as a coordination point for substrate.

This sequence belongs to the alanine racemase family. Requires pyridoxal 5'-phosphate as cofactor.

It catalyses the reaction L-alanine = D-alanine. It participates in amino-acid biosynthesis; D-alanine biosynthesis; D-alanine from L-alanine: step 1/1. In terms of biological role, catalyzes the interconversion of L-alanine and D-alanine. May also act on other amino acids. This chain is Alanine racemase (alr), found in Carboxydothermus hydrogenoformans (strain ATCC BAA-161 / DSM 6008 / Z-2901).